The following is a 61-amino-acid chain: Cobrotoxin-c (61 aa).

4 disulfide bridges follow: Cys-3/Cys-23, Cys-17/Cys-40, Cys-42/Cys-53, and Cys-54/Cys-59.

This sequence belongs to the three-finger toxin family. Short-chain subfamily. Type I alpha-neurotoxin sub-subfamily. In terms of tissue distribution, expressed by the venom gland.

Its subcellular location is the secreted. Functionally, produces peripheral paralysis by blocking neuromuscular transmission at the postsynaptic site. Binds to the nicotinic acetylcholine receptor. The sequence is that of Cobrotoxin-c from Naja kaouthia (Monocled cobra).